We begin with the raw amino-acid sequence, 175 residues long: Granulocyte colony-stimulating factor (175 aa).

2 disulfides stabilise this stretch: cysteine 37–cysteine 43 and cysteine 65–cysteine 75. Threonine 134 carries O-linked (GalNAc...) threonine glycosylation.

Belongs to the IL-6 superfamily. In terms of assembly, monomer. In terms of processing, O-glycosylated.

The protein resides in the secreted. Granulocyte/macrophage colony-stimulating factors are cytokines that act in hematopoiesis by controlling the production, differentiation, and function of 2 related white cell populations of the blood, the granulocytes and the monocytes-macrophages. This CSF induces granulocytes. The chain is Granulocyte colony-stimulating factor (CSF3) from Canis lupus familiaris (Dog).